The primary structure comprises 223 residues: Large ribosomal subunit protein bL21 (223 aa).

The disordered stretch occupies residues 110–149 (TALKSTTAEPKAADAPKAKAKAAPKAEKAAAPKAEKAPAK). Residues 133–147 (PKAEKAAAPKAEKAP) show a composition bias toward basic and acidic residues.

This sequence belongs to the bacterial ribosomal protein bL21 family. Part of the 50S ribosomal subunit. Contacts protein L20.

In terms of biological role, this protein binds to 23S rRNA in the presence of protein L20. The sequence is that of Large ribosomal subunit protein bL21 from Maricaulis maris (strain MCS10) (Caulobacter maris).